We begin with the raw amino-acid sequence, 785 residues long: Uncoating factor OPG117 (785 aa).

Residue aspartate 170 is part of the active site. Residues 342–469 (TERGDHIVWI…ELMNIINDIQ (128 aa)) form a primase region. The 163-residue stretch at 477-639 (KNRELYEKTL…FSQPSGREAA (163 aa)) folds into the SF3 helicase domain. Residue 503–510 (GETATGKS) coordinates ATP.

It belongs to the orthopoxvirus OPG117 family. As to quaternary structure, homomultimer; hexamer. Interacts with OPG148.

The protein localises to the host cytoplasm. Its function is as follows. Multifunctional protein required for genome uncoating and replication. Major viral uncoating protein that is required for the release of the viral genome from incoming viral cores containing the viral DNA genome. Possesses an ATPase activity that is required for hexamerization and uncoating. The protein is Uncoating factor OPG117 (OPG117) of Bos taurus (Bovine).